The primary structure comprises 317 residues: Ribonuclease Z (317 aa).

The Zn(2+) site is built by H61, H63, D65, H66, H139, D210, and H268. D65 (proton acceptor) is an active-site residue.

Belongs to the RNase Z family. Homodimer. Zn(2+) serves as cofactor.

It catalyses the reaction Endonucleolytic cleavage of RNA, removing extra 3' nucleotides from tRNA precursor, generating 3' termini of tRNAs. A 3'-hydroxy group is left at the tRNA terminus and a 5'-phosphoryl group is left at the trailer molecule.. With respect to regulation, inhibited by high salt concentrations. In terms of biological role, zinc phosphodiesterase, which displays some tRNA 3'-processing endonuclease activity. Probably involved in tRNA maturation, by removing a 3'-trailer from precursor tRNA. Can also catalyze the 5' end cleavage of the 5S rRNA. The polypeptide is Ribonuclease Z (Haloferax volcanii (strain ATCC 29605 / DSM 3757 / JCM 8879 / NBRC 14742 / NCIMB 2012 / VKM B-1768 / DS2) (Halobacterium volcanii)).